A 1646-amino-acid chain; its full sequence is Monensin-resistant homolog 2 (1646 aa).

It belongs to the MON2 family.

It is found in the golgi apparatus. May be required for traffic between late Golgi and early endosomes. This is Monensin-resistant homolog 2 (mon-2) from Caenorhabditis elegans.